The sequence spans 165 residues: uncharacterized protein (165 aa).

This is an uncharacterized protein from Rickettsia conorii (strain ATCC VR-613 / Malish 7).